The chain runs to 316 residues: 4-hydroxy-3-methylbut-2-enyl diphosphate reductase (316 aa).

[4Fe-4S] cluster is bound at residue C12. (2E)-4-hydroxy-3-methylbut-2-enyl diphosphate contacts are provided by H41 and H74. Positions 41 and 74 each coordinate dimethylallyl diphosphate. The isopentenyl diphosphate site is built by H41 and H74. [4Fe-4S] cluster is bound at residue C96. H124 provides a ligand contact to (2E)-4-hydroxy-3-methylbut-2-enyl diphosphate. H124 serves as a coordination point for dimethylallyl diphosphate. H124 lines the isopentenyl diphosphate pocket. Residue E126 is the Proton donor of the active site. T169 contacts (2E)-4-hydroxy-3-methylbut-2-enyl diphosphate. A [4Fe-4S] cluster-binding site is contributed by C199. Residues S227, S228, N229, and S271 each contribute to the (2E)-4-hydroxy-3-methylbut-2-enyl diphosphate site. Residues S227, S228, N229, and S271 each contribute to the dimethylallyl diphosphate site. Isopentenyl diphosphate contacts are provided by S227, S228, N229, and S271.

Belongs to the IspH family. Requires [4Fe-4S] cluster as cofactor.

It catalyses the reaction isopentenyl diphosphate + 2 oxidized [2Fe-2S]-[ferredoxin] + H2O = (2E)-4-hydroxy-3-methylbut-2-enyl diphosphate + 2 reduced [2Fe-2S]-[ferredoxin] + 2 H(+). The enzyme catalyses dimethylallyl diphosphate + 2 oxidized [2Fe-2S]-[ferredoxin] + H2O = (2E)-4-hydroxy-3-methylbut-2-enyl diphosphate + 2 reduced [2Fe-2S]-[ferredoxin] + 2 H(+). The protein operates within isoprenoid biosynthesis; dimethylallyl diphosphate biosynthesis; dimethylallyl diphosphate from (2E)-4-hydroxy-3-methylbutenyl diphosphate: step 1/1. It functions in the pathway isoprenoid biosynthesis; isopentenyl diphosphate biosynthesis via DXP pathway; isopentenyl diphosphate from 1-deoxy-D-xylulose 5-phosphate: step 6/6. Functionally, catalyzes the conversion of 1-hydroxy-2-methyl-2-(E)-butenyl 4-diphosphate (HMBPP) into a mixture of isopentenyl diphosphate (IPP) and dimethylallyl diphosphate (DMAPP). Acts in the terminal step of the DOXP/MEP pathway for isoprenoid precursor biosynthesis. The protein is 4-hydroxy-3-methylbut-2-enyl diphosphate reductase of Xanthomonas campestris pv. campestris (strain ATCC 33913 / DSM 3586 / NCPPB 528 / LMG 568 / P 25).